We begin with the raw amino-acid sequence, 376 residues long: MAQKQKCVAMLLAGGKGSRLSALTKNLAKPAVPFGGKYRIIDFTLSNCANSGIETVGILTQYQPLELHNYIGIGNAWDLDRVSGGVTVLPPYAESSGVKWYTGTASAIYQNLNYLSQYEPEYVLILSGDHIYKMDYSKMLDYHIEKEADVSISVIEVPWDEASRFGIMNTNEEMEIVEFEEKPQFPRSNLASMGIYIFNWAILKEYLEMDARNPESSNDFGKDVLPLLLDEGKKLMAYPFEGYWKDVGTVKSLWEANMDLLRDETSLNLNDRNWRIYSVNPNEPPQYIAEKAKVEESLINEGCVIEGDVKHSVLFQGVTVEEGSMVIDSVVMPGAKIGKNVVIERAIVGSEMVIEDGTIIRPEKNVDDVVLIAEGK.

Residues tyrosine 101, glycine 166, 181 to 182 (EK), and serine 192 contribute to the alpha-D-glucose 1-phosphate site.

Belongs to the bacterial/plant glucose-1-phosphate adenylyltransferase family. Homotetramer.

It catalyses the reaction alpha-D-glucose 1-phosphate + ATP + H(+) = ADP-alpha-D-glucose + diphosphate. It participates in glycan biosynthesis; glycogen biosynthesis. Functionally, involved in the biosynthesis of ADP-glucose, a building block required for the elongation reactions to produce glycogen. Catalyzes the reaction between ATP and alpha-D-glucose 1-phosphate (G1P) to produce pyrophosphate and ADP-Glc. This is Glucose-1-phosphate adenylyltransferase from Bacillus cereus (strain ATCC 10987 / NRS 248).